A 600-amino-acid chain; its full sequence is Aspartate--tRNA(Asp/Asn) ligase (600 aa).

Residue glutamate 176 participates in L-aspartate binding. The interval 200–203 (QQFK) is aspartate. Residues arginine 222 and histidine 452 each coordinate L-aspartate. Residue 222–224 (RDE) participates in ATP binding. Glutamate 490 is an ATP binding site. L-aspartate is bound at residue arginine 497. Residue 542–545 (GIDR) coordinates ATP.

This sequence belongs to the class-II aminoacyl-tRNA synthetase family. Type 1 subfamily. In terms of assembly, homodimer.

It localises to the cytoplasm. It catalyses the reaction tRNA(Asx) + L-aspartate + ATP = L-aspartyl-tRNA(Asx) + AMP + diphosphate. Its function is as follows. Aspartyl-tRNA synthetase with relaxed tRNA specificity since it is able to aspartylate not only its cognate tRNA(Asp) but also tRNA(Asn). Reaction proceeds in two steps: L-aspartate is first activated by ATP to form Asp-AMP and then transferred to the acceptor end of tRNA(Asp/Asn). This is Aspartate--tRNA(Asp/Asn) ligase from Rickettsia felis (strain ATCC VR-1525 / URRWXCal2) (Rickettsia azadi).